We begin with the raw amino-acid sequence, 547 residues long: Protein RBL (547 aa).

5 WD repeats span residues 21–60 (LEHGVIKCVAFNHRGSLLAAGCADGGCVIWDFETRGIAKE), 65–104 (DCSAAITSVSWSKYGHRLLVSAADKSLTLWDVSTGEKIAR), 214–253 (SGAAPVKNIVFSRNGQYLLTNSHDRTIRIYENLLPAKNVL), 285–332 (EFQD…VKIL), and 334–373 (GPKEALIDLAWHPVHPIIVSVSLAGLVYIWAKDYTENWSA). The interval 466-547 (SPASEEAGQN…GGDDDDDAYY (82 aa)) is disordered. Basic and acidic residues predominate over residues 499-511 (SEKAMELQAEKAK). Acidic residues predominate over residues 530–547 (QETDDSINGGDDDDDAYY).

As to quaternary structure, part of a complex composed of TRO, RBL and WDR5A. Interacts with TRO and WDR5A, but not with WDR5B. This complex is formed during both vegetative and reproductive development. In terms of tissue distribution, strongly expressed in root tips, shoot apices, vascular tissues, developing embryos and endosperms.

It localises to the nucleus. Promotes the expression of FLC and FLC homologs to repress the floral transition. Promotes WRKY70 and LTP7 genes epigenetic methylation (e.g. H3K4me3) and subsequent expression. The chain is Protein RBL from Arabidopsis thaliana (Mouse-ear cress).